The sequence spans 1067 residues: Protein CLEC16A homolog (1067 aa).

In terms of domain architecture, FPL spans L50–Y199. A helical transmembrane segment spans residues S333 to V353. The span at S409–D418 shows a compositional bias: low complexity. 4 disordered regions span residues S409–Q434, A837–S861, S876–H993, and Q1037–V1067. The segment covering V421 to D432 has biased composition (polar residues). Polar residues predominate over residues S876–P888. Residues R917 to S926 show a composition bias toward basic and acidic residues. Residues P927–S947 are compositionally biased toward low complexity. Over residues R951–H974 the composition is skewed to basic and acidic residues. Residues S975–H993 are compositionally biased toward polar residues. A compositionally biased stretch (basic and acidic residues) spans E1057–V1067.

This sequence belongs to the CLEC16A/gop-1 family. In terms of assembly, interacts with the class C Vps-HOPS complex components; Car, Dor and Vps16a.

The protein resides in the cytoplasmic vesicle. It is found in the autophagosome membrane. It localises to the late endosome membrane. Its subcellular location is the golgi apparatus membrane. Functionally, required for mitophagy, autophagy and endosome maturation, possibly by acting in multiple membrane trafficking pathways. Required for endosome trafficking and maturation. Functions with the class C Vps-HOPS complex member Vps16a to promote endosomal maturation into degradative late endosomes and lysosomes. In response to starvation, functions at an early stage of autophagy to promote autophagosome growth and efficient autophagy. Essential for the recruitment of lva-positive Golgi elements to autophagosomes. Likely to function by promoting membrane traffic from the Golgi complex to the developing autophagosomes. Also regulates synaptic growth at the neuromuscular junctions (NMJ) by down-regulating BMP signaling. The protein is Protein CLEC16A homolog of Drosophila melanogaster (Fruit fly).